A 645-amino-acid chain; its full sequence is Fructose-1,6-bisphosphatase class 3 (645 aa).

It belongs to the FBPase class 3 family. The cofactor is Mn(2+).

The catalysed reaction is beta-D-fructose 1,6-bisphosphate + H2O = beta-D-fructose 6-phosphate + phosphate. Its pathway is carbohydrate biosynthesis; gluconeogenesis. This is Fructose-1,6-bisphosphatase class 3 from Fusobacterium nucleatum subsp. nucleatum (strain ATCC 25586 / DSM 15643 / BCRC 10681 / CIP 101130 / JCM 8532 / KCTC 2640 / LMG 13131 / VPI 4355).